The primary structure comprises 115 residues: Large ribosomal subunit protein bL19 (115 aa).

The protein belongs to the bacterial ribosomal protein bL19 family.

Functionally, this protein is located at the 30S-50S ribosomal subunit interface and may play a role in the structure and function of the aminoacyl-tRNA binding site. The chain is Large ribosomal subunit protein bL19 from Thermosipho melanesiensis (strain DSM 12029 / CIP 104789 / BI429).